An 83-amino-acid polypeptide reads, in one-letter code: MKTLLLTLVVVTIVCLDLGYSLICFNQETYRPETTTTCPDGEDTCYSTFWNDHRGVKIERGCGCPRVNPGISIICCKTDKCNN.

Residues 1-21 (MKTLLLTLVVVTIVCLDLGYS) form the signal peptide. Cystine bridges form between Cys24–Cys45, Cys38–Cys62, Cys64–Cys75, and Cys76–Cys81.

The protein belongs to the three-finger toxin family. Short-chain subfamily. Expressed by the venom gland.

Its subcellular location is the secreted. The chain is Weak neurotoxin WNTX33 from Ophiophagus hannah (King cobra).